The primary structure comprises 211 residues: ATP-dependent Clp protease proteolytic subunit 1 (211 aa).

The active-site Nucleophile is S107. The active site involves H132.

The protein belongs to the peptidase S14 family. As to quaternary structure, fourteen ClpP subunits assemble into 2 heptameric rings which stack back to back to give a disk-like structure with a central cavity, resembling the structure of eukaryotic proteasomes.

The protein localises to the cytoplasm. It carries out the reaction Hydrolysis of proteins to small peptides in the presence of ATP and magnesium. alpha-casein is the usual test substrate. In the absence of ATP, only oligopeptides shorter than five residues are hydrolyzed (such as succinyl-Leu-Tyr-|-NHMec, and Leu-Tyr-Leu-|-Tyr-Trp, in which cleavage of the -Tyr-|-Leu- and -Tyr-|-Trp bonds also occurs).. Cleaves peptides in various proteins in a process that requires ATP hydrolysis. Has a chymotrypsin-like activity. Plays a major role in the degradation of misfolded proteins. In Mycolicibacterium paratuberculosis (strain ATCC BAA-968 / K-10) (Mycobacterium paratuberculosis), this protein is ATP-dependent Clp protease proteolytic subunit 1.